The chain runs to 352 residues: NAD(P)H pyrophosphatase NUDT13, mitochondrial (352 aa).

The N-terminal 20 residues, 1–20, are a transit peptide targeting the mitochondrion; that stretch reads MSLYCRTFFRRKSFGCYRLL. In terms of domain architecture, Nudix hydrolase spans 196 to 323; the sequence is PQMAPVVITL…SLALQPSEAS (128 aa). The Nudix box signature appears at 216-240; sequence RQSSFPKGLYSALAGFCDIGESVEE.

The protein belongs to the Nudix hydrolase family. The cofactor is Mg(2+). It depends on Mn(2+) as a cofactor.

Its subcellular location is the mitochondrion. The enzyme catalyses NADH + H2O = reduced beta-nicotinamide D-ribonucleotide + AMP + 2 H(+). The catalysed reaction is NAD(+) + H2O = beta-nicotinamide D-ribonucleotide + AMP + 2 H(+). It carries out the reaction NADPH + H2O = reduced beta-nicotinamide D-ribonucleotide + adenosine 2',5'-bisphosphate + 2 H(+). Functionally, NAD(P)H pyrophosphatase that hydrolyzes NADH into NMNH and AMP, and NADPH into NMNH and 2',5'-ADP. Has a marked preference for the reduced pyridine nucleotides. Does not show activity toward NAD-capped RNAs; the NAD-cap is an atypical cap present at the 5'-end of some RNAs. This is NAD(P)H pyrophosphatase NUDT13, mitochondrial from Mus musculus (Mouse).